The primary structure comprises 128 residues: NHP2-like protein 1 (128 aa).

The tract at residues 36-48 is interaction with U4 snRNA and U4atac snRNA; sequence RKGANEATKTLNR. The tract at residues 96-128 is important for U4 snRNA-binding; that stretch reads SRPVIACSVTIKEGSQLKPQIQSVQQAIERLLV.

This sequence belongs to the eukaryotic ribosomal protein eL8 family. As to quaternary structure, identified in the spliceosome B complex. Component of the U4/U6-U5 tri-snRNP complex. Part of the small subunit (SSU) processome, composed of more than 70 proteins and the RNA chaperone small nucleolar RNA (snoRNA) U3.

It localises to the nucleus. It is found in the nucleolus. Part of the small subunit (SSU) processome, first precursor of the small eukaryotic ribosomal subunit. During the assembly of the SSU processome in the nucleolus, many ribosome biogenesis factors, an RNA chaperone and ribosomal proteins associate with the nascent pre-rRNA and work in concert to generate RNA folding, modifications, rearrangements and cleavage as well as targeted degradation of pre-ribosomal RNA by the RNA exosome. Involved in pre-mRNA splicing as component of the spliceosome. Binds to the 5'-stem-loop of U4 snRNA and thereby contributes to spliceosome assembly. The protein undergoes a conformational change upon RNA-binding. Core component of box C/D small nucleolar ribonucleoprotein (snoRNP) complexes that function in methylation of multiple sites on ribosomal RNAs (rRNAs) and messenger RNAs (mRNAs). This is NHP2-like protein 1 from Xenopus laevis (African clawed frog).